We begin with the raw amino-acid sequence, 515 residues long: Maturase K (515 aa).

It belongs to the intron maturase 2 family. MatK subfamily.

It is found in the plastid. It localises to the chloroplast. In terms of biological role, usually encoded in the trnK tRNA gene intron. Probably assists in splicing its own and other chloroplast group II introns. This is Maturase K from Pinus leiophylla (Chihuahua pine).